Here is a 693-residue protein sequence, read N- to C-terminus: Polyphosphate kinase (693 aa).

Asn-57 provides a ligand contact to ATP. Residues Arg-383 and Arg-413 each coordinate Mg(2+). His-443 serves as the catalytic Phosphohistidine intermediate. The ATP site is built by Tyr-476, Arg-572, and His-601.

Belongs to the polyphosphate kinase 1 (PPK1) family. Mg(2+) is required as a cofactor. Post-translationally, an intermediate of this reaction is the autophosphorylated ppk in which a phosphate is covalently linked to a histidine residue through a N-P bond.

The catalysed reaction is [phosphate](n) + ATP = [phosphate](n+1) + ADP. Functionally, catalyzes the reversible transfer of the terminal phosphate of ATP to form a long-chain polyphosphate (polyP). This chain is Polyphosphate kinase, found in Acinetobacter baumannii (strain ATCC 17978 / DSM 105126 / CIP 53.77 / LMG 1025 / NCDC KC755 / 5377).